A 613-amino-acid chain; its full sequence is Protein ECM3 (613 aa).

The next 4 helical transmembrane spans lie at 10–30 (IWAS…GFGL), 74–94 (GIIC…AFIV), 106–126 (GGIL…AYLQ), and 143–163 (VANV…LGGF). The disordered stretch occupies residues 177–256 (DEENTLTNDD…PAIDDRSSNS (80 aa)). 2 stretches are compositionally biased toward polar residues: residues 187 to 206 (SAQQ…SNQD) and 213 to 226 (ESTV…SYIS). Residues Ser291 and Ser338 each carry the phosphoserine modification. Positions 345 to 366 (RRRKSSISSQGAPSVLQADGTI) are disordered. Transmembrane regions (helical) follow at residues 432 to 452 (MAVI…LFVT), 471 to 491 (FIMD…LILL), 546 to 566 (MLLF…LIYF), and 587 to 607 (FLML…SYFI).

It localises to the endoplasmic reticulum membrane. May be involved in cell wall organization and biogenesis. The sequence is that of Protein ECM3 (ECM3) from Saccharomyces cerevisiae (strain ATCC 204508 / S288c) (Baker's yeast).